A 308-amino-acid polypeptide reads, in one-letter code: Ornithine carbamoyltransferase (308 aa).

Carbamoyl phosphate contacts are provided by residues S55–T58, Q82, R106, and H133–Q136. L-ornithine contacts are provided by residues N164, D227, and S231–M232. Carbamoyl phosphate contacts are provided by residues C267–L268 and R295.

It belongs to the aspartate/ornithine carbamoyltransferase superfamily. OTCase family.

The protein resides in the cytoplasm. The enzyme catalyses carbamoyl phosphate + L-ornithine = L-citrulline + phosphate + H(+). It participates in amino-acid biosynthesis; L-arginine biosynthesis; L-arginine from L-ornithine and carbamoyl phosphate: step 1/3. Functionally, reversibly catalyzes the transfer of the carbamoyl group from carbamoyl phosphate (CP) to the N(epsilon) atom of ornithine (ORN) to produce L-citrulline. This is Ornithine carbamoyltransferase from Prochlorococcus marinus (strain MIT 9312).